Reading from the N-terminus, the 286-residue chain is Pantothenate synthetase (286 aa).

30 to 37 is an ATP binding site; it reads MGNLHEGH. His-37 (proton donor) is an active-site residue. Residue Gln-64 participates in (R)-pantoate binding. A beta-alanine-binding site is contributed by Gln-64. Residue 151 to 154 participates in ATP binding; sequence GKKD. Gln-157 contacts (R)-pantoate. ATP is bound by residues Leu-180 and 188 to 191; that span reads LSSR.

It belongs to the pantothenate synthetase family. Homodimer.

Its subcellular location is the cytoplasm. It catalyses the reaction (R)-pantoate + beta-alanine + ATP = (R)-pantothenate + AMP + diphosphate + H(+). Its pathway is cofactor biosynthesis; (R)-pantothenate biosynthesis; (R)-pantothenate from (R)-pantoate and beta-alanine: step 1/1. Functionally, catalyzes the condensation of pantoate with beta-alanine in an ATP-dependent reaction via a pantoyl-adenylate intermediate. The polypeptide is Pantothenate synthetase (Leptothrix cholodnii (strain ATCC 51168 / LMG 8142 / SP-6) (Leptothrix discophora (strain SP-6))).